Consider the following 590-residue polypeptide: Guanylate-binding protein 5 (590 aa).

An NLRP3-binding region spans residues Met1–Gly306. The segment at Met1 to Ser310 is GTPase domain (Globular). Residues Thr35–Lys277 form the GB1/RHD3-type G domain. GTP contacts are provided by residues Gly45 to Ser52, Val67 to Ser69, Arg182 to Asp183, and Leu246. Positions Gln529–Ser590 are required for tetramerization, but not for dimerization. Cys587 bears the Cysteine methyl ester mark. Residue Cys587 is the site of S-geranylgeranyl cysteine attachment. Positions Val588–Ser590 are cleaved as a propeptide — removed in mature form.

This sequence belongs to the TRAFAC class dynamin-like GTPase superfamily. GB1/RHD3 GTPase family. GB1 subfamily. Homodimer; homodimerizes upon GTP-binding, forming a close face-to-face dimer. Heterodimer with other family members, including GBP1, GBP2, GBP3 and GBP4. May also form tetramers (dimer of dimers) in the presence of GTP. Interacts with NLRP3, possibly in its tetrameric form, and promotes PYCARD/ASC polymerization. Post-translationally, isoprenylation is required for proper subcellular location. Low expression, if any, in many tissues in the absence of stimulation.

The protein localises to the cytoplasmic vesicle membrane. It is found in the golgi apparatus membrane. It localises to the cytoplasm. It catalyses the reaction GTP + H2O = GDP + phosphate + H(+). Functionally, interferon (IFN)-inducible GTPase that plays important roles in innate immunity against a diverse range of bacterial, viral and protozoan pathogens. Hydrolyzes GTP, but in contrast to other family members, does not produce GMP. Following infection, recruited to the pathogen-containing vacuoles or vacuole-escaped bacteria and acts as a positive regulator of inflammasome assembly by promoting the release of inflammasome ligands from bacteria. Acts by promoting lysis of pathogen-containing vacuoles, releasing pathogens into the cytosol. Following pathogen release in the cytosol, promotes recruitment of proteins that mediate bacterial cytolysis, such as Gm12250/Irgb10: this liberates ligands that are detected by inflammasomes, such as lipopolysaccharide (LPS) that activates the non-canonical CASP4/CASP11 inflammasome or double-stranded DNA (dsDNA) that activates the AIM2 inflammasome. As an activator of NLRP3 inflammasome assembly: promotes selective NLRP3 inflammasome assembly in response to microbial and soluble, but not crystalline, agents. Independently of its GTPase activity, acts as an inhibitor of various viruses infectivity by inhibiting FURIN-mediated maturation of viral envelope proteins. This Mus musculus (Mouse) protein is Guanylate-binding protein 5.